Consider the following 122-residue polypeptide: Large ribosomal subunit protein uL14 (122 aa).

It belongs to the universal ribosomal protein uL14 family. In terms of assembly, part of the 50S ribosomal subunit. Forms a cluster with proteins L3 and L19. In the 70S ribosome, L14 and L19 interact and together make contacts with the 16S rRNA in bridges B5 and B8.

In terms of biological role, binds to 23S rRNA. Forms part of two intersubunit bridges in the 70S ribosome. The sequence is that of Large ribosomal subunit protein uL14 from Rickettsia rickettsii (strain Iowa).